Reading from the N-terminus, the 329-residue chain is NADH-quinone oxidoreductase subunit H (329 aa).

9 helical membrane passes run 9-29 (LIKI…ATYI), 42-62 (GPCY…IKLF), 75-95 (FIFT…MAPI), 117-137 (IGFL…ILAG), 154-174 (IQLL…LMVV), 188-208 (GGFL…FLIA), 238-258 (LKWG…SFVI), 269-291 (WGFI…LSMW), and 309-329 (WKIM…IILI).

This sequence belongs to the complex I subunit 1 family. As to quaternary structure, NDH-1 is composed of 14 different subunits. Subunits NuoA, H, J, K, L, M, N constitute the membrane sector of the complex.

Its subcellular location is the cell inner membrane. The enzyme catalyses a quinone + NADH + 5 H(+)(in) = a quinol + NAD(+) + 4 H(+)(out). In terms of biological role, NDH-1 shuttles electrons from NADH, via FMN and iron-sulfur (Fe-S) centers, to quinones in the respiratory chain. The immediate electron acceptor for the enzyme in this species is believed to be ubiquinone. Couples the redox reaction to proton translocation (for every two electrons transferred, four hydrogen ions are translocated across the cytoplasmic membrane), and thus conserves the redox energy in a proton gradient. This subunit may bind ubiquinone. This Helicobacter pylori (strain Shi470) protein is NADH-quinone oxidoreductase subunit H.